Here is a 108-residue protein sequence, read N- to C-terminus: Vacuolar ATPase assembly integral membrane protein VMA21 (108 aa).

Over 1–34 the chain is Cytoplasmic; sequence MASRRSAAAKKEDFSFEAAATQSAHEAQEGFPSS. The chain crosses the membrane as a helical span at residues 35 to 55; sequence VIIKLVLVTVAMICAPLGTYF. Residues 56–68 lie on the Lumenal side of the membrane; it reads GTLNTICGGDSSY. A helical membrane pass occupies residues 69–89; it reads AGALAAISVNVVLIIYLIIAA. The Cytoplasmic segment spans residues 90–108; that stretch reads REDTGESEEERKGKEGKEE.

The protein belongs to the VMA21 family.

It localises to the endoplasmic reticulum membrane. The protein resides in the endoplasmic reticulum-Golgi intermediate compartment membrane. Its subcellular location is the cytoplasmic vesicle. It is found in the COPII-coated vesicle membrane. Functionally, required for the assembly of the V0 complex of the vacuolar ATPase (V-ATPase) in the endoplasmic reticulum. The polypeptide is Vacuolar ATPase assembly integral membrane protein VMA21 (Ajellomyces capsulatus (strain NAm1 / WU24) (Darling's disease fungus)).